Reading from the N-terminus, the 905-residue chain is Sun domain-containing protein 1 (905 aa).

Disordered regions lie at residues 1 to 21 (MSGD…LPLQ), 41 to 166 (NNTV…ILKQ), and 207 to 242 (QQQQ…IDNN). Topologically, residues 1–290 (MSGDYKPNYQ…NNNNKVNFKQ (290 aa)) are nuclear. Low complexity-rich tracts occupy residues 41–67 (NNTV…SSYL) and 75–101 (SNQI…ASSS). Positions 107–116 (KVDHNSHNNN) are enriched in basic and acidic residues. Over residues 117–126 (DDDDIEDDVD) the composition is skewed to acidic residues. Polar residues predominate over residues 129 to 146 (YSTNNASSNILHNRFSNS). Residues 170–221 (LYNHLNNQIQQQQQQQQQQQQQQQQQQQQQQQQQQQQQQQQQQQRNNNNNSN) adopt a coiled-coil conformation. Low complexity predominate over residues 207-227 (QQQQQQQRNNNNNSNSSNNNN). The helical transmembrane segment at 291 to 311 (AIWIFIFSVLFIGCLLGLFST) threads the bilayer. At 312 to 905 (NFYGIHIYFP…IEKQQQSDEL (594 aa)) the chain is on the perinuclear space side. Coiled-coil stretches lie at residues 359–456 (KKNE…QLIQ) and 504–609 (REFN…TQQF). One can recognise an SUN domain in the interval 662 to 860 (GASIEYNALH…YRFRVHGYQI (199 aa)). A coiled-coil region spans residues 864–901 (EQEQIQIIQEEQSFKQEEINQQQIEQIEQIEQIEKQQQ).

Homodimer and homooligomer.

The protein resides in the nucleus membrane. In terms of biological role, may have an important role in defining the spacing of the nuclear envelope lumen. Essential for centrosome attachment to the nucleus, maintenance of correct ploidy, proper mitosis, association of the centromere cluster with the centrosome and the maintenance of genome stability. Requires direct chromatin binding for inner nuclear membrane targeting. This is Sun domain-containing protein 1 (sun1) from Dictyostelium discoideum (Social amoeba).